A 547-amino-acid chain; its full sequence is CTP synthase (547 aa).

The segment at 1 to 267 is amidoligase domain; it reads MTKFVFVTGG…AQQTLALLNL (267 aa). Serine 13 is a CTP binding site. Residue serine 13 participates in UTP binding. ATP is bound by residues 14 to 19 and aspartate 71; that span reads SIGKGI. Mg(2+) is bound by residues aspartate 71 and glutamate 141. CTP contacts are provided by residues 148 to 150, 188 to 193, and lysine 224; these read DIE and KTKPTQ. Residues 188-193 and lysine 224 contribute to the UTP site; that span reads KTKPTQ. The Glutamine amidotransferase type-1 domain occupies 292-534; that stretch reads EIALVGKYVQ…VKAAVDHYST (243 aa). Glycine 354 is a binding site for L-glutamine. The Nucleophile; for glutamine hydrolysis role is filled by cysteine 381. L-glutamine is bound by residues 382–385, glutamate 405, and arginine 462; that span reads LGMQ. Active-site residues include histidine 507 and glutamate 509.

This sequence belongs to the CTP synthase family. Homotetramer.

The catalysed reaction is UTP + L-glutamine + ATP + H2O = CTP + L-glutamate + ADP + phosphate + 2 H(+). It catalyses the reaction L-glutamine + H2O = L-glutamate + NH4(+). It carries out the reaction UTP + NH4(+) + ATP = CTP + ADP + phosphate + 2 H(+). The protein operates within pyrimidine metabolism; CTP biosynthesis via de novo pathway; CTP from UDP: step 2/2. With respect to regulation, allosterically activated by GTP, when glutamine is the substrate; GTP has no effect on the reaction when ammonia is the substrate. The allosteric effector GTP functions by stabilizing the protein conformation that binds the tetrahedral intermediate(s) formed during glutamine hydrolysis. Inhibited by the product CTP, via allosteric rather than competitive inhibition. Functionally, catalyzes the ATP-dependent amination of UTP to CTP with either L-glutamine or ammonia as the source of nitrogen. Regulates intracellular CTP levels through interactions with the four ribonucleotide triphosphates. In Rippkaea orientalis (strain PCC 8801 / RF-1) (Cyanothece sp. (strain PCC 8801)), this protein is CTP synthase.